A 158-amino-acid polypeptide reads, in one-letter code: Urease subunit beta (158 aa).

Positions 113–158 are disordered; sequence EDDWRRSSAAGDAPQELPQVEAAERGRKLDEATDVGTEDTPEEGQN. Over residues 134-143 the composition is skewed to basic and acidic residues; the sequence is AAERGRKLDE. Residues 144 to 158 show a composition bias toward acidic residues; the sequence is ATDVGTEDTPEEGQN.

The protein belongs to the urease beta subunit family. As to quaternary structure, heterotrimer of UreA (gamma), UreB (beta) and UreC (alpha) subunits. Three heterotrimers associate to form the active enzyme.

Its subcellular location is the cytoplasm. The catalysed reaction is urea + 2 H2O + H(+) = hydrogencarbonate + 2 NH4(+). It participates in nitrogen metabolism; urea degradation; CO(2) and NH(3) from urea (urease route): step 1/1. The protein is Urease subunit beta of Corynebacterium glutamicum (strain R).